The following is a 311-amino-acid chain: Long form salivary protein D7L1 (311 aa).

The signal sequence occupies residues 1 to 21 (MIVTGVLLFILLELFAQGSQA). Intrachain disulfides connect C37–C73, C69–C128, C178–C211, and C252–C263.

The protein belongs to the PBP/GOBP family.

The protein resides in the secreted. In terms of biological role, modulates blood feeding of female mosquitoes on vertebrate species by binding and sequestering different mediators involved in the host response. Binds leukotriene C4 and U-46619, a stable analog of thromboxane A2. Inhibits agonist-induced platelet aggregation. Exhibits vasodilating activity. The sequence is that of Long form salivary protein D7L1 from Anopheles gambiae (African malaria mosquito).